We begin with the raw amino-acid sequence, 295 residues long: MLIIDGKKVSLDMKEELKASVESYRSITGKVPGLTVIIVGSDPASEVYVRNKAKTCKEVGMNSSVIELQEDTPEAHLLEVIDSLNRDPAVHGILVQQPLPKQIDEFAVTLAIDPAKDVDGFHPENLGRLVMGHLDKCFVSCTPYGILELIGRYGIETSGKHCVVIGRSNIVGKPMANLMMQKLKESNCTVTVCHSATKDIASYTRQADILIAAIGRAKFVTADMVKQGAVVIDVGINRIEDPTTKSGTRLVGDVDYEGVSAKAAAMTPVPGGVGPMTIAMLLKNTLHSFERANGL.

Residues 166–168, Ser195, and Ile236 contribute to the NADP(+) site; that span reads GRS.

Belongs to the tetrahydrofolate dehydrogenase/cyclohydrolase family. Homodimer.

It catalyses the reaction (6R)-5,10-methylene-5,6,7,8-tetrahydrofolate + NADP(+) = (6R)-5,10-methenyltetrahydrofolate + NADPH. The catalysed reaction is (6R)-5,10-methenyltetrahydrofolate + H2O = (6R)-10-formyltetrahydrofolate + H(+). It functions in the pathway one-carbon metabolism; tetrahydrofolate interconversion. In terms of biological role, catalyzes the oxidation of 5,10-methylenetetrahydrofolate to 5,10-methenyltetrahydrofolate and then the hydrolysis of 5,10-methenyltetrahydrofolate to 10-formyltetrahydrofolate. The polypeptide is Bifunctional protein FolD (Chlorobium luteolum (strain DSM 273 / BCRC 81028 / 2530) (Pelodictyon luteolum)).